Here is a 347-residue protein sequence, read N- to C-terminus: N-acetyl-gamma-glutamyl-phosphate reductase (347 aa).

Cysteine 150 is an active-site residue.

This sequence belongs to the NAGSA dehydrogenase family. Type 1 subfamily.

It localises to the cytoplasm. The catalysed reaction is N-acetyl-L-glutamate 5-semialdehyde + phosphate + NADP(+) = N-acetyl-L-glutamyl 5-phosphate + NADPH + H(+). It participates in amino-acid biosynthesis; L-arginine biosynthesis; N(2)-acetyl-L-ornithine from L-glutamate: step 3/4. In terms of biological role, catalyzes the NADPH-dependent reduction of N-acetyl-5-glutamyl phosphate to yield N-acetyl-L-glutamate 5-semialdehyde. The protein is N-acetyl-gamma-glutamyl-phosphate reductase of Leifsonia xyli subsp. xyli (strain CTCB07).